A 369-amino-acid polypeptide reads, in one-letter code: Protein RecA (369 aa).

Over residues M1 to K10 the composition is skewed to basic and acidic residues. The interval M1–E20 is disordered. Position 82 to 89 (G82 to T89) interacts with ATP. Positions P350 to V369 are disordered. Residues D358 to V369 are compositionally biased toward acidic residues.

Belongs to the RecA family.

The protein resides in the cytoplasm. In terms of biological role, can catalyze the hydrolysis of ATP in the presence of single-stranded DNA, the ATP-dependent uptake of single-stranded DNA by duplex DNA, and the ATP-dependent hybridization of homologous single-stranded DNAs. It interacts with LexA causing its activation and leading to its autocatalytic cleavage. This Gloeobacter violaceus (strain ATCC 29082 / PCC 7421) protein is Protein RecA.